Here is an 86-residue protein sequence, read N- to C-terminus: Small ribosomal subunit protein bS20 (86 aa).

The interval 1-26 (MANIKSAKKRALQSEKSRKHNASRRT) is disordered.

The protein belongs to the bacterial ribosomal protein bS20 family.

Binds directly to 16S ribosomal RNA. The sequence is that of Small ribosomal subunit protein bS20 from Psychromonas ingrahamii (strain DSM 17664 / CCUG 51855 / 37).